A 470-amino-acid chain; its full sequence is GWYMGTEIGVRDFCDYQRYNILEEVGRRMGLETHKLSSLWKDQALVTINVAVTYSFQKNKVIITDHHSAAESFMKHLETEFPPARRLPADWDWLVPPMSGSLTPIFHQEMVNYILSPFFYYQPDPWMTHVWRNGEMCLKKQQISFKAVARAALFSSTLMSRVLANRVRCTVLYATETGKSQTLAQRLNSMLNCAFNSRLLCMEDYNFSDMEQESLLVVVMSTFGNGGSPGNGESFKKQLFSLQYLRNKSRYCVFGLGSRMYPQFCAFAHAVDAKLEELGAERVTPTGEGDELNGQEEAFSAWALTALKDAYKEFKIQGQLSLQLPGAERFCEAWDPLRHRVAVESCPQDRITALSAIHSKAVLPMKLKSKHNLQSPQSSRSTILVELERERSPEVMDFAPGDHVGVFPGNLPQLVAGILKFLPQTPPTNQCLRLGYRSDTFRVMRKTGRLLDASQHSLCLRHSPTSWTLP.

The L-arginine site is built by tryptophan 2, tyrosine 3, and glutamate 7. (6R)-L-erythro-5,6,7,8-tetrahydrobiopterin is bound by residues arginine 11, tryptophan 93, and phenylalanine 106. Tyrosine 121 is a binding site for heme b. Residues 145-165 are calmodulin-binding; it reads FKAVARAALFSSTLMSRVLAN. The Flavodoxin-like domain occupies 169 to 307; sequence CTVLYATETG…AFSAWALTAL (139 aa). Residues threonine 175, glutamate 176, threonine 177, lysine 179, serine 180, serine 221, threonine 222, serine 258, cysteine 265, glutamate 291, and glutamine 295 each coordinate FMN. Arginine 380 is an NADP(+) binding site. Histidine 403 contacts FAD. NADP(+) is bound at residue threonine 440.

The protein belongs to the NOS family. In terms of assembly, homodimer. It depends on heme b as a cofactor. Requires FAD as cofactor. FMN serves as cofactor. The cofactor is (6R)-L-erythro-5,6,7,8-tetrahydrobiopterin.

The protein localises to the cytoplasm. Its subcellular location is the cytosol. It catalyses the reaction 2 L-arginine + 3 NADPH + 4 O2 + H(+) = 2 L-citrulline + 2 nitric oxide + 3 NADP(+) + 4 H2O. Not stimulated by calcium/calmodulin. Its function is as follows. Produces nitric oxide (NO) which is a messenger molecule with diverse functions throughout the body. In macrophages, NO mediates tumoricidal and bactericidal actions. Also has nitrosylase activity and mediates cysteine S-nitrosylation of cytoplasmic target proteins such COX2. The polypeptide is Nitric oxide synthase, inducible (nos2) (Oncorhynchus mykiss (Rainbow trout)).